Here is a 366-residue protein sequence, read N- to C-terminus: Aminomethyltransferase (366 aa).

Belongs to the GcvT family. In terms of assembly, the glycine cleavage system is composed of four proteins: P, T, L and H.

It carries out the reaction N(6)-[(R)-S(8)-aminomethyldihydrolipoyl]-L-lysyl-[protein] + (6S)-5,6,7,8-tetrahydrofolate = N(6)-[(R)-dihydrolipoyl]-L-lysyl-[protein] + (6R)-5,10-methylene-5,6,7,8-tetrahydrofolate + NH4(+). The glycine cleavage system catalyzes the degradation of glycine. The chain is Aminomethyltransferase from Bacillus cereus (strain G9842).